Here is a 172-residue protein sequence, read N- to C-terminus: Shikimate kinase (172 aa).

11-16 lines the ATP pocket; sequence GTGKTA. Mg(2+) is bound at residue Thr-15. Substrate is bound by residues Asp-33, Arg-57, and Gly-79. Residue Arg-117 participates in ATP binding. Arg-136 provides a ligand contact to substrate.

This sequence belongs to the shikimate kinase family. As to quaternary structure, monomer. Mg(2+) serves as cofactor.

Its subcellular location is the cytoplasm. The enzyme catalyses shikimate + ATP = 3-phosphoshikimate + ADP + H(+). It functions in the pathway metabolic intermediate biosynthesis; chorismate biosynthesis; chorismate from D-erythrose 4-phosphate and phosphoenolpyruvate: step 5/7. Its function is as follows. Catalyzes the specific phosphorylation of the 3-hydroxyl group of shikimic acid using ATP as a cosubstrate. This chain is Shikimate kinase, found in Pelotomaculum thermopropionicum (strain DSM 13744 / JCM 10971 / SI).